The chain runs to 164 residues: Nucleotide-binding protein Mfla_1706 (164 aa).

This sequence belongs to the YajQ family.

Functionally, nucleotide-binding protein. This is Nucleotide-binding protein Mfla_1706 from Methylobacillus flagellatus (strain ATCC 51484 / DSM 6875 / VKM B-1610 / KT).